The primary structure comprises 115 residues: Large ribosomal subunit protein bL19 (115 aa).

This sequence belongs to the bacterial ribosomal protein bL19 family.

Its function is as follows. This protein is located at the 30S-50S ribosomal subunit interface and may play a role in the structure and function of the aminoacyl-tRNA binding site. This chain is Large ribosomal subunit protein bL19, found in Streptococcus equi subsp. zooepidemicus (strain H70).